We begin with the raw amino-acid sequence, 527 residues long: Bifunctional purine biosynthesis protein PurH (527 aa).

The region spanning 1–149 is the MGS-like domain; sequence MASDFLPVRR…KNFARVAVAT (149 aa).

The protein belongs to the PurH family.

It catalyses the reaction (6R)-10-formyltetrahydrofolate + 5-amino-1-(5-phospho-beta-D-ribosyl)imidazole-4-carboxamide = 5-formamido-1-(5-phospho-D-ribosyl)imidazole-4-carboxamide + (6S)-5,6,7,8-tetrahydrofolate. It carries out the reaction IMP + H2O = 5-formamido-1-(5-phospho-D-ribosyl)imidazole-4-carboxamide. It participates in purine metabolism; IMP biosynthesis via de novo pathway; 5-formamido-1-(5-phospho-D-ribosyl)imidazole-4-carboxamide from 5-amino-1-(5-phospho-D-ribosyl)imidazole-4-carboxamide (10-formyl THF route): step 1/1. The protein operates within purine metabolism; IMP biosynthesis via de novo pathway; IMP from 5-formamido-1-(5-phospho-D-ribosyl)imidazole-4-carboxamide: step 1/1. In Xanthomonas oryzae pv. oryzae (strain MAFF 311018), this protein is Bifunctional purine biosynthesis protein PurH.